A 356-amino-acid chain; its full sequence is 1-deoxy-D-xylulose 5-phosphate reductoisomerase (356 aa).

NADPH contacts are provided by Thr7, Gly8, Ser9, Ile10, Gly31, Asn33, and Asn111. Lys112 is a 1-deoxy-D-xylulose 5-phosphate binding site. Glu113 serves as a coordination point for NADPH. Asp131 is a binding site for Mn(2+). Residues Ser132, Glu133, Ser155, and His178 each contribute to the 1-deoxy-D-xylulose 5-phosphate site. Position 133 (Glu133) interacts with Mn(2+). Gly184 is a binding site for NADPH. 1-deoxy-D-xylulose 5-phosphate-binding residues include Ser191, Asn196, Lys197, and Glu200. Mn(2+) is bound at residue Glu200.

The protein belongs to the DXR family. It depends on Mg(2+) as a cofactor. Mn(2+) is required as a cofactor.

The enzyme catalyses 2-C-methyl-D-erythritol 4-phosphate + NADP(+) = 1-deoxy-D-xylulose 5-phosphate + NADPH + H(+). It functions in the pathway isoprenoid biosynthesis; isopentenyl diphosphate biosynthesis via DXP pathway; isopentenyl diphosphate from 1-deoxy-D-xylulose 5-phosphate: step 1/6. Its function is as follows. Catalyzes the NADPH-dependent rearrangement and reduction of 1-deoxy-D-xylulose-5-phosphate (DXP) to 2-C-methyl-D-erythritol 4-phosphate (MEP). The polypeptide is 1-deoxy-D-xylulose 5-phosphate reductoisomerase (Campylobacter jejuni subsp. jejuni serotype O:6 (strain 81116 / NCTC 11828)).